The following is a 236-amino-acid chain: 1-(5-phosphoribosyl)-5-[(5-phosphoribosylamino)methylideneamino] imidazole-4-carboxamide isomerase (236 aa).

Residue Asp-8 is the Proton acceptor of the active site. The active-site Proton donor is the Asp-129.

It belongs to the HisA/HisF family.

Its subcellular location is the cytoplasm. The enzyme catalyses 1-(5-phospho-beta-D-ribosyl)-5-[(5-phospho-beta-D-ribosylamino)methylideneamino]imidazole-4-carboxamide = 5-[(5-phospho-1-deoxy-D-ribulos-1-ylimino)methylamino]-1-(5-phospho-beta-D-ribosyl)imidazole-4-carboxamide. It participates in amino-acid biosynthesis; L-histidine biosynthesis; L-histidine from 5-phospho-alpha-D-ribose 1-diphosphate: step 4/9. The sequence is that of 1-(5-phosphoribosyl)-5-[(5-phosphoribosylamino)methylideneamino] imidazole-4-carboxamide isomerase from Methanospirillum hungatei JF-1 (strain ATCC 27890 / DSM 864 / NBRC 100397 / JF-1).